The following is a 115-amino-acid chain: MKVLVICAVLFLAIFSNSSAETEDDFLEDESFEADDVIPFLAREQVRKDDKNCIPKHHECTNDKKNCCKKGLTKMKCKCFTVADAKGATSERCACDSSLLQKFGFTGLHIIKGLF.

The first 20 residues, 1–20 (MKVLVICAVLFLAIFSNSSA), serve as a signal peptide directing secretion. Residues 21–47 (ETEDDFLEDESFEADDVIPFLAREQVR) constitute a propeptide that is removed on maturation. Cystine bridges form between Cys53–Cys68, Cys60–Cys77, Cys67–Cys95, and Cys79–Cys93.

The protein belongs to the neurotoxin 19 (CSTX) family. In terms of assembly, monomer. Interacts with CSTX-13 (AC P83919) (Kd=370 nM), but does not interact with CSTX-1 (AC P81694). Expressed by the venom gland.

Its subcellular location is the secreted. The protein resides in the target cell membrane. Functionally, synergistic toxin that induces or increases a cytolytic effect when combined with CSTX-1 (AC P81694) or CSTX-13 (AC P83919). Potassium ions and M-ctenitoxin-Cs1a (AC P83619) have also an effect on its activity. When alone, has no insecticidal activity. The protein is Toxin CSTX-9 of Cupiennius salei (American wandering spider).